The sequence spans 371 residues: MSEMSLIMLAAGNSTRFNTKVKKQFLRLGNDPLWLYATKNLSSFYPFKKIVVTSSNITYMKKFTKNYEFIEGGDTRAESLKKALELIDSEFVMVSDVARVLVSKNLFDRLIENLDKADCITPALKVADTTLFDNEALQREKIKLIQTPQISKTKLLKKALDQNLEFTDDSTAIAAMGGKIWFVEGEENARKLTFKEDLKKLNLPTPSFEIFTGNGFDVHEFGENRPLLLAGVQIHPTMGLKAHSDGDVLAHSLTDAILGAAGLGDIGELYPDTDMKFKNANSMELLKQAYDKVREIGFELINIDICVMAQSPKLKDFKQAMQSNIAHTLDLDEFRINVKATTTEKLGFIGRKEGMAVLSSVNLKYFDWTRL.

The tract at residues 1 to 210 (MSEMSLIMLA…LNLPTPSFEI (210 aa)) is 2-C-methyl-D-erythritol 4-phosphate cytidylyltransferase. Positions 211–371 (FTGNGFDVHE…NLKYFDWTRL (161 aa)) are 2-C-methyl-D-erythritol 2,4-cyclodiphosphate synthase. A divalent metal cation-binding residues include aspartate 217 and histidine 219. 4-CDP-2-C-methyl-D-erythritol 2-phosphate-binding positions include 217 to 219 (DVH) and 243 to 244 (HS). Residue histidine 251 coordinates a divalent metal cation. Residues 265-267 (DIG), 270-274 (YPDTD), 341-344 (TTTE), phenylalanine 348, and arginine 351 contribute to the 4-CDP-2-C-methyl-D-erythritol 2-phosphate site.

This sequence in the N-terminal section; belongs to the IspD/TarI cytidylyltransferase family. IspD subfamily. It in the C-terminal section; belongs to the IspF family. A divalent metal cation is required as a cofactor.

It catalyses the reaction 2-C-methyl-D-erythritol 4-phosphate + CTP + H(+) = 4-CDP-2-C-methyl-D-erythritol + diphosphate. The catalysed reaction is 4-CDP-2-C-methyl-D-erythritol 2-phosphate = 2-C-methyl-D-erythritol 2,4-cyclic diphosphate + CMP. The protein operates within isoprenoid biosynthesis; isopentenyl diphosphate biosynthesis via DXP pathway; isopentenyl diphosphate from 1-deoxy-D-xylulose 5-phosphate: step 2/6. It participates in isoprenoid biosynthesis; isopentenyl diphosphate biosynthesis via DXP pathway; isopentenyl diphosphate from 1-deoxy-D-xylulose 5-phosphate: step 4/6. Its function is as follows. Bifunctional enzyme that catalyzes the formation of 4-diphosphocytidyl-2-C-methyl-D-erythritol from CTP and 2-C-methyl-D-erythritol 4-phosphate (MEP) (IspD), and catalyzes the conversion of 4-diphosphocytidyl-2-C-methyl-D-erythritol 2-phosphate (CDP-ME2P) to 2-C-methyl-D-erythritol 2,4-cyclodiphosphate (ME-CPP) with a corresponding release of cytidine 5-monophosphate (CMP) (IspF). The sequence is that of Bifunctional enzyme IspD/IspF from Campylobacter jejuni (strain RM1221).